The chain runs to 111 residues: DIVLTQSPASLAVSLGQRATISCRASESVVNYGVSLMHWFQQKPGQPPKLLIYGASNRGSGVPARFSGSGSGTDFSLIIHPMEEDDSAMYFCHQTKEVPWTFGGGTDLEIE.

A framework-1 region spans residues 1-23 (DIVLTQSPASLAVSLGQRATISC). Cysteines 23 and 92 form a disulfide. Residues 24–38 (RASESVVNYGVSLMH) are complementarity-determining-1. Residues 39–53 (WFQQKPGQPPKLLIY) are framework-2. Positions 54–60 (GASNRGS) are complementarity-determining-2. The interval 61–92 (GVPARFSGSGSGTDFSLIIHPMEEDDSAMYFC) is framework-3. Positions 93–101 (HQTKEVPWT) are complementarity-determining-3. Residues 102–111 (FGGGTDLEIE) are framework-4.

The sequence is that of Ig kappa chain V-III region PC 2413 from Mus musculus (Mouse).